The sequence spans 553 residues: Transcription factor GAMYB (553 aa).

Residues methionine 1–glutamine 17 are compositionally biased toward basic and acidic residues. Positions methionine 1 to tryptophan 45 are disordered. Residues serine 27 to proline 38 are compositionally biased toward gly residues. HTH myb-type domains follow at residues glycine 37–leucine 89 and arginine 90–glutamine 144. 2 consecutive DNA-binding regions (H-T-H motif) follow at residues tryptophan 65 to leucine 89 and tryptophan 117 to isoleucine 140. The tract at residues proline 464–proline 488 is disordered.

Its subcellular location is the nucleus. Transcriptional activator of gibberellin-dependent alpha-amylase expression in aleurone cells. Involved in pollen and floral organs development. May bind to the 5'-TAACAAA-3' box of alpha-amylase promoter. The polypeptide is Transcription factor GAMYB (GAM1) (Oryza sativa subsp. indica (Rice)).